The sequence spans 401 residues: Ufm1-specific protease 2 (401 aa).

Catalysis depends on residues Cys-234, Asp-358, and His-360.

Belongs to the peptidase C78 family.

It localises to the endoplasmic reticulum. The protein resides in the cytoplasm. Its subcellular location is the nucleus. Thiol-dependent isopeptidase that specifically cleaves UFM1, a ubiquitin-like modifier protein, from conjugated proteins. While it is also able to mediate the processing of UFM1 precursors, a prerequisite for conjugation reactions, ufsp2 mainly acts as a protein deUFMylase that mediates deconjugation of UFM1 from target proteins. The sequence is that of Ufm1-specific protease 2 from Danio rerio (Zebrafish).